A 245-amino-acid polypeptide reads, in one-letter code: uncharacterized protein (245 aa).

Basic and acidic residues predominate over residues 162-174; sequence KEQSDVTTSERTR. The disordered stretch occupies residues 162 to 183; that stretch reads KEQSDVTTSERTRSPPGSSKTT.

This is an uncharacterized protein from Homo sapiens (Human).